The chain runs to 153 residues: Actin-related protein 2/3 complex subunit 5-like protein (153 aa).

S64 carries the phosphoserine modification.

The protein belongs to the ARPC5 family. May be a component of the Arp2/3 complex in which it may replace ARPC5.

The protein resides in the cytoplasm. Its subcellular location is the cytoskeleton. Its function is as follows. May function as component of the Arp2/3 complex which is involved in regulation of actin polymerization and together with an activating nucleation-promoting factor (NPF) mediates the formation of branched actin networks. This Rattus norvegicus (Rat) protein is Actin-related protein 2/3 complex subunit 5-like protein (Arpc5l).